The sequence spans 283 residues: Gap junction beta-1 protein (283 aa).

At 1–22 (MNWTGLYTLLSGVNRHSTAIGR) the chain is on the cytoplasmic side. Residues 23-45 (VWLSVIFIFRIMVLVVAAESVWG) form a helical membrane-spanning segment. The Extracellular segment spans residues 46–75 (DEKSSFICNTLQPGCNSVCYDHFFPISHVR). A helical membrane pass occupies residues 76–95 (LWSLQLILVSTPALLVAMHV). The Cytoplasmic portion of the chain corresponds to 96-130 (AHQQHIEKKMLRLEGHGDPIHLEEVKRHKVHISGT). A helical membrane pass occupies residues 131-153 (LWWTYVISVVFRLLFEAAFMYVF). The Extracellular portion of the chain corresponds to 154–191 (YLLYPGYAMVRLVKCDAYPCPNTVDCFVSRPTEKTVFT). A helical membrane pass occupies residues 192–214 (VFMLAASGICIILNVAEVVYLIV). Residues 215–283 (RACARRAQRR…AEKSDRCSAC (69 aa)) lie on the Cytoplasmic side of the membrane. Ser-233, Ser-258, Ser-266, and Ser-277 each carry phosphoserine.

The protein belongs to the connexin family. Beta-type (group I) subfamily. A connexon is composed of a hexamer of connexins. Interacts with CNST.

It is found in the cell membrane. It localises to the cell junction. The protein localises to the gap junction. One gap junction consists of a cluster of closely packed pairs of transmembrane channels, the connexons, through which materials of low MW diffuse from one cell to a neighboring cell. This Equus caballus (Horse) protein is Gap junction beta-1 protein (GJB1).